Here is a 149-residue protein sequence, read N- to C-terminus: Large ribosomal subunit protein bL9 (149 aa).

The protein belongs to the bacterial ribosomal protein bL9 family.

In terms of biological role, binds to the 23S rRNA. The protein is Large ribosomal subunit protein bL9 of Vibrio cholerae serotype O1 (strain ATCC 39541 / Classical Ogawa 395 / O395).